Here is a 34-residue protein sequence, read N- to C-terminus: Conotoxin S4.3 (34 aa).

The residue at position 1 (Gln1) is a Pyrrolidone carboxylic acid. Glu3 carries the 4-carboxyglutamate modification. Ser7 is a glycosylation site (O-linked (HexNAc...) serine). Thr9 carries O-linked (HexNAc...) threonine glycosylation. 4 positions are modified to 4-hydroxyproline: Pro17, Pro22, Pro31, and Pro32.

It belongs to the conotoxin A superfamily. Contains 3 disulfide bonds. Expressed by the venom duct.

It is found in the secreted. Its function is as follows. Probable neurotoxin with ion channel inhibitor activity. The chain is Conotoxin S4.3 from Conus striatus (Striated cone).